A 418-amino-acid chain; its full sequence is Somatostatin receptor type 3 (418 aa).

Residues 1–21 (MDMLHPSSVSTTSEPENASSA) form a disordered region. Residues 1–43 (MDMLHPSSVSTTSEPENASSAWPPDATLGNVSAGPSPAGLAVS) are Extracellular-facing. Residues 7–20 (SSVSTTSEPENASS) show a composition bias toward polar residues. 2 N-linked (GlcNAc...) asparagine glycosylation sites follow: Asn17 and Asn30. Residues 44 to 69 (GVLIPLVYLVVCVVGLLGNSLVIYVV) form a helical membrane-spanning segment. Topologically, residues 70–79 (LRHTASPSVT) are cytoplasmic. The chain crosses the membrane as a helical span at residues 80-101 (NVYILNLALADELFMLGLPFLA). The Extracellular segment spans residues 102–116 (AQNALSYWPFGSLMC). A disulfide bond links Cys116 and Cys191. The chain crosses the membrane as a helical span at residues 117–138 (RLVMAVDGINQFTSIFCLTVMS). Over 139–161 (VDRYLAVVHPTRSARWRTAPVAR) the chain is Cytoplasmic. Residues 162-181 (TVSAAVWVASAVVVLPVVVF) traverse the membrane as a helical segment. Residues 182-205 (SGVPRGMSTCHMQWPEPAAAWRAG) lie on the Extracellular side of the membrane. A helical membrane pass occupies residues 206-231 (FIIYTAALGFFGPLLVICLCYLLIVV). Residues 232–257 (KVRSAGRRVWAPSCQRRRRSERRVTR) are Cytoplasmic-facing. The helical transmembrane segment at 258-279 (MVVAVVALFVLCWMPFYVLNIV) threads the bilayer. The Extracellular segment spans residues 280–293 (NVVCPLPEEPAFFG). The chain crosses the membrane as a helical span at residues 294–316 (LYFLVVALPYANSCANPILYGFL). At 317-418 (SYRFKQGFRR…KSSTMRISYL (102 aa)) the chain is on the cytoplasmic side. Phosphoserine is present on residues Ser332 and Ser337. Residues 335–418 (VRSQEPTVGP…KSSTMRISYL (84 aa)) form a disordered region. Thr348 is subject to Phosphothreonine. A compositionally biased stretch (acidic residues) spans 348 to 360 (TEEEDEEEEDGEE). Basic and acidic residues predominate over residues 361–371 (SREGGKGKEMN). Polar residues-rich tracts occupy residues 373–385 (RVSQ…TSGQ) and 395–418 (KEQQ…ISYL).

This sequence belongs to the G-protein coupled receptor 1 family. As to quaternary structure, homodimer and heterodimer with SSTR2. Heterodimerization with SSTR2 inactivates SSTR3 receptor function. Phosphorylated. Phosphorylation increases upon somatostatin binding. Brain, pituitary and pancreas.

It is found in the cell membrane. Receptor for somatostatin-14 and -28. This receptor is coupled via pertussis toxin sensitive G proteins to inhibition of adenylyl cyclase. This chain is Somatostatin receptor type 3 (SSTR3), found in Homo sapiens (Human).